We begin with the raw amino-acid sequence, 284 residues long: Four and a half LIM domains protein 5 (284 aa).

The C4-type zinc finger occupies 8-32 (CQYCTASLLGKKYVLKDDSLFCVTC). LIM zinc-binding domains are found at residues 39-100 (NYCE…ECSS), 101-160 (KCFH…KEFA), 161-220 (HYCN…LYAN), and 223-283 (VACS…MDSD).

As to quaternary structure, interacts with CREM (via the third LIM domain). Interacts (via second LIM domain) with SPAG8.

The protein resides in the nucleus. Functionally, may be involved in the regulation of spermatogenesis. Stimulates CREM transcriptional activity in a phosphorylation-independent manner. The chain is Four and a half LIM domains protein 5 (FHL5) from Macaca fascicularis (Crab-eating macaque).